The sequence spans 129 residues: MTTEYIGEIVISPRVLEVITGIATTQVEGVHSLHNKKMADSFNKASLGKGVYLQTEEDGSVTADIYVYLQYGVKVPTVSMNIQKTVKSAVYDMAEVPISAVNIHVEGIVAEKTPKPDLKSLFDEDFLDD.

This is an uncharacterized protein from Streptococcus pyogenes serotype M6 (strain ATCC BAA-946 / MGAS10394).